Reading from the N-terminus, the 554-residue chain is Propanediol dehydratase large subunit (554 aa).

The protein belongs to the diol/glycerol dehydratase large subunit family. In terms of assembly, the propanediol dehydratase enzyme is a heterotrimeric complex composed of a large (PduC), a medium (PduD) and a small (PduE) subunit. The cofactor is adenosylcob(III)alamin.

Its subcellular location is the bacterial microcompartment. The catalysed reaction is propane-1,2-diol = propanal + H2O. It functions in the pathway polyol metabolism; 1,2-propanediol degradation. Part of the PduCDE complex that catalyzes the dehydration of 1,2-propanediol (1,2-PD) to propionaldehyde. This subunit is directly targeted to the bacterial microcompartment (BMC). Functionally, expression of a cosmid containing the full 21-gene pdu operon in E.coli allows E.coli to grow on 1,2-propanediol (1,2-PD) with the appearance of BMCs in its cytoplasm. Its function is as follows. The 1,2-PD-specific bacterial microcompartment (BMC) concentrates low levels of 1,2-PD catabolic enzymes, concentrates volatile reaction intermediates thus enhancing pathway flux and keeps the level of toxic, mutagenic propionaldehyde low. The protein is Propanediol dehydratase large subunit of Citrobacter freundii.